The sequence spans 565 residues: Hemagglutinin-neuraminidase (565 aa).

Topologically, residues 1-20 (MVAEDAPVRGTCRVLFRTTT) are intravirion. A helical membrane pass occupies residues 21–41 (LIFLCTLLALSISILYESLII). Over 42-565 (QKQIMSQAGS…VPFIRQVTLS (524 aa)) the chain is Virion surface. N-linked (GlcNAc...) asparagine; by host glycosylation is found at N110 and N139. 3 disulfides stabilise this stretch: C161–C185, C175–C236, and C227–C240. Residues 223–228 (NRKSCS) are involved in neuraminidase activity. N267 carries N-linked (GlcNAc...) asparagine; by host glycosylation. Intrachain disulfides connect C333–C454, C365–C375, and C448–C458. N504 carries an N-linked (GlcNAc...) asparagine; by host glycan. An intrachain disulfide couples C528 to C539.

Belongs to the paramyxoviruses hemagglutinin-neuraminidase family. As to quaternary structure, homotetramer; composed of disulfide-linked homodimers. Interacts with F protein trimer.

The protein resides in the virion membrane. It localises to the host cell membrane. The catalysed reaction is Hydrolysis of alpha-(2-&gt;3)-, alpha-(2-&gt;6)-, alpha-(2-&gt;8)- glycosidic linkages of terminal sialic acid residues in oligosaccharides, glycoproteins, glycolipids, colominic acid and synthetic substrates.. Its function is as follows. Attaches the virus to sialic acid-containing cell receptors and thereby initiating infection. Binding of HN protein to the receptor induces a conformational change that allows the F protein to trigger virion/cell membranes fusion. In terms of biological role, neuraminidase activity ensures the efficient spread of the virus by dissociating the mature virions from the neuraminic acid containing glycoproteins. The sequence is that of Hemagglutinin-neuraminidase (HN) from Parainfluenza virus 5 (isolate Canine/CPI-) (PIV5).